A 350-amino-acid chain; its full sequence is UDP-N-acetylenolpyruvoylglucosamine reductase (350 aa).

Residues 24–195 enclose the FAD-binding PCMH-type domain; sequence HVEATARWLL…VAVEFNLPLL (172 aa). Arg172 is a catalytic residue. Catalysis depends on Ser245, which acts as the Proton donor. Glu342 is a catalytic residue.

This sequence belongs to the MurB family. FAD is required as a cofactor.

Its subcellular location is the cytoplasm. It carries out the reaction UDP-N-acetyl-alpha-D-muramate + NADP(+) = UDP-N-acetyl-3-O-(1-carboxyvinyl)-alpha-D-glucosamine + NADPH + H(+). Its pathway is cell wall biogenesis; peptidoglycan biosynthesis. Its function is as follows. Cell wall formation. This is UDP-N-acetylenolpyruvoylglucosamine reductase from Xanthomonas oryzae pv. oryzae (strain PXO99A).